The primary structure comprises 1119 residues: Ubiquitin-associated protein 2 (1119 aa).

The segment at 1–26 (MMTSVSSDHCRGAREKPQISAAQSTQ) is disordered. Basic and acidic residues predominate over residues 8–17 (DHCRGAREKP). The region spanning 48-92 (KNDSDFEAKVKQLMEVTGKNQDECIVALHDCNGDVNKAINILLEG) is the UBA domain. A coiled-coil region spans residues 105-130 (KKKNFAKENSENKENREKKSEKESSR). The segment covering 110–130 (AKENSENKENREKKSEKESSR) has biased composition (basic and acidic residues). 7 disordered regions span residues 110 to 202 (AKEN…YSDS), 385 to 476 (LGQF…SPST), 622 to 736 (VHNR…SSHQ), 853 to 905 (RDGS…VNPA), 937 to 966 (SAKQ…YSTG), 982 to 1020 (GGYA…GSVY), and 1082 to 1119 (HLPQ…YWTN). Omega-N-methylarginine is present on arginine 166. Residues 168–182 (KRARGRGFGRGRGRG) show a composition bias toward basic residues. A compositionally biased stretch (low complexity) spans 389 to 407 (TTTPSTQQNSTSHPTTTTS). Serine 432, serine 439, serine 473, and serine 630 each carry phosphoserine. The span at 435–447 (LSQLSQRQQHQSQ) shows a compositional bias: low complexity. Over residues 651–662 (SQQTLDTPKTTG) the composition is skewed to polar residues. The segment covering 663–678 (PPSALPSVSSLPSTTS) has biased composition (low complexity). Residues 679 to 694 (CTALLPSTSQHTGDLT) are compositionally biased toward polar residues. Composition is skewed to low complexity over residues 695–736 (SSPL…SSHQ) and 874–900 (SASP…AQQP). A compositionally biased stretch (polar residues) spans 943–957 (VNLSTPTPPFQQASG). Low complexity-rich tracts occupy residues 1002 to 1011 (GVSVSSSTTG) and 1088 to 1102 (QSGS…SLQP).

May interact with ANXA2.

The protein localises to the nucleus. Its subcellular location is the chromosome. It localises to the cytoplasm. In terms of biological role, recruits the ubiquitination machinery to RNA polymerase II for polyubiquitination, removal and degradation, when the transcription-coupled nucleotide excision repair (TC-NER) machinery fails to resolve DNA damage. May promote the degradation of ANXA2. In Homo sapiens (Human), this protein is Ubiquitin-associated protein 2.